Here is a 348-residue protein sequence, read N- to C-terminus: Dihydroorotase (348 aa).

2 residues coordinate Zn(2+): His-17 and His-19. Substrate is bound by residues His-19–Arg-21 and Asn-45. Lys-103, His-140, and His-178 together coordinate Zn(2+). Lys-103 is subject to N6-carboxylysine. His-140 is a binding site for substrate. Leu-223 contacts substrate. Position 251 (Asp-251) interacts with Zn(2+). Residue Asp-251 is part of the active site. 2 residues coordinate substrate: His-255 and Ala-267.

Belongs to the metallo-dependent hydrolases superfamily. DHOase family. Class II DHOase subfamily. In terms of assembly, homodimer. Zn(2+) serves as cofactor.

The enzyme catalyses (S)-dihydroorotate + H2O = N-carbamoyl-L-aspartate + H(+). It functions in the pathway pyrimidine metabolism; UMP biosynthesis via de novo pathway; (S)-dihydroorotate from bicarbonate: step 3/3. Catalyzes the reversible cyclization of carbamoyl aspartate to dihydroorotate. In Salmonella paratyphi A (strain ATCC 9150 / SARB42), this protein is Dihydroorotase.